Reading from the N-terminus, the 458-residue chain is Major capsid protein (458 aa).

Residues 21 to 110 (LEGLTAAQKA…EIKSLLTARE (90 aa)) are a coiled coil.

The protein belongs to the HK97 phage major capsid protein family. As to quaternary structure, interacts with the decoration protein; each hexon binds a single copy of the decoration protein. Interacts with the portal protein. The scaffolding domain delta is cleaved by the prohead protease and lost after assembly. The major capsid protein precursors together with both the portal complex and the maturation protease form prohead I. All copies of the major capsid protein precursor are cleaved to the mature major capsid protein by release of the scaffolding domain delta, yielding the metastable prohead II.

It is found in the virion. In terms of biological role, major capsid protein that self-associates to form 120 hexamers and 11 pentamers, building the T=13 icosahedral capsid which about 860 Angstroms in diameter. Responsible for its self-assembly into a procapsid. The phage does not need to encode a separate scaffolfing protein because its capsid protein contains the delta domain that carries that function. The capsid gains its final stability through the reorganization of the subunits that takes place upon expansion. DNA encapsidation through the portal triggers capsid expansion and the binding of the decoration protein to the capsid exterior. Might play a role in counteracting the host Pycsar defense system that is mediated by pyrimidine cyclases and leads to abortive infection. This Escherichia coli (Enterobacteria phage T5) protein is Major capsid protein.